The chain runs to 303 residues: Methionyl-tRNA formyltransferase (303 aa).

109 to 112 (SLLP) contacts (6S)-5,6,7,8-tetrahydrofolate.

Belongs to the Fmt family.

It catalyses the reaction L-methionyl-tRNA(fMet) + (6R)-10-formyltetrahydrofolate = N-formyl-L-methionyl-tRNA(fMet) + (6S)-5,6,7,8-tetrahydrofolate + H(+). Attaches a formyl group to the free amino group of methionyl-tRNA(fMet). The formyl group appears to play a dual role in the initiator identity of N-formylmethionyl-tRNA by promoting its recognition by IF2 and preventing the misappropriation of this tRNA by the elongation apparatus. This is Methionyl-tRNA formyltransferase from Helicobacter pylori (strain ATCC 700392 / 26695) (Campylobacter pylori).